The sequence spans 232 residues: MLVKICGVKDVEAAQVALESGADMIGMIFVPGKPRTIQVSNAKEVVSLVESKRKGLNSNELYDSLKPGQDSLWFEQVHDSIKSNGPYSVGVFRNQSIEEINNIIEEVDIDFVQLHGQESHDEYIPQLKKPVITRFVPNETKVLQSLKPNKHLLPLFDSEAGGEGVKLNWSNLSDWSAKNNARYLLAGGLTPDNVHEAIKLDGVIGVDVSGGVETNGVKDYVKIKEFVKNALQ.

The protein belongs to the TrpF family.

It catalyses the reaction N-(5-phospho-beta-D-ribosyl)anthranilate = 1-(2-carboxyphenylamino)-1-deoxy-D-ribulose 5-phosphate. The protein operates within amino-acid biosynthesis; L-tryptophan biosynthesis; L-tryptophan from chorismate: step 3/5. The chain is N-(5'-phosphoribosyl)anthranilate isomerase (TRP1) from Wickerhamomyces anomalus (Yeast).